A 700-amino-acid chain; its full sequence is uncharacterized protein (700 aa).

Transmembrane regions (helical) follow at residues 24–44, 67–87, 89–109, 115–135, 139–159, 383–403, 420–440, 461–481, and 491–511; these read VLCL…GLLF, LIIG…LLAK, VPLP…AELG, LLPA…YMPV, LLIY…WFWI, LMGT…VLLV, VGTV…IPEG, YGWA…LLWL, and LIDT…LWPQ.

It belongs to the YccS/YhfK family.

It localises to the cell membrane. This is an uncharacterized protein from Escherichia coli (strain K12).